The chain runs to 349 residues: Flagellar P-ring protein (349 aa).

The N-terminal stretch at Met1–Ser16 is a signal peptide.

The protein belongs to the FlgI family. In terms of assembly, the basal body constitutes a major portion of the flagellar organelle and consists of four rings (L,P,S, and M) mounted on a central rod.

It is found in the periplasm. The protein localises to the bacterial flagellum basal body. In terms of biological role, assembles around the rod to form the L-ring and probably protects the motor/basal body from shearing forces during rotation. The protein is Flagellar P-ring protein of Aliarcobacter butzleri (strain RM4018) (Arcobacter butzleri).